A 131-amino-acid chain; its full sequence is D-ribose pyranase (131 aa).

The active-site Proton donor is His-20. Substrate is bound by residues Asp-28, His-98, and 120–122 (YSN).

This sequence belongs to the RbsD / FucU family. RbsD subfamily. As to quaternary structure, homodecamer.

The protein resides in the cytoplasm. The catalysed reaction is beta-D-ribopyranose = beta-D-ribofuranose. It functions in the pathway carbohydrate metabolism; D-ribose degradation; D-ribose 5-phosphate from beta-D-ribopyranose: step 1/2. Functionally, catalyzes the interconversion of beta-pyran and beta-furan forms of D-ribose. This Limosilactobacillus fermentum (strain NBRC 3956 / LMG 18251) (Lactobacillus fermentum) protein is D-ribose pyranase.